Reading from the N-terminus, the 266-residue chain is tRNA (guanine-N(7)-)-methyltransferase (266 aa).

Residues 1–32 (MSDHGRMHIPESGLATPAAAHSDDPPHPHFNR) are disordered. Residues Glu-96, Glu-121, Asp-148, and Asp-171 each coordinate S-adenosyl-L-methionine. The active site involves Asp-171. Residues Lys-175 and Asp-207 each contribute to the substrate site.

The protein belongs to the class I-like SAM-binding methyltransferase superfamily. TrmB family.

It catalyses the reaction guanosine(46) in tRNA + S-adenosyl-L-methionine = N(7)-methylguanosine(46) in tRNA + S-adenosyl-L-homocysteine. It participates in tRNA modification; N(7)-methylguanine-tRNA biosynthesis. Catalyzes the formation of N(7)-methylguanine at position 46 (m7G46) in tRNA. This Mycolicibacterium vanbaalenii (strain DSM 7251 / JCM 13017 / BCRC 16820 / KCTC 9966 / NRRL B-24157 / PYR-1) (Mycobacterium vanbaalenii) protein is tRNA (guanine-N(7)-)-methyltransferase.